Reading from the N-terminus, the 429-residue chain is Trigger factor (429 aa).

In terms of domain architecture, PPIase FKBP-type spans 161–246 (EDRVTIDFTG…LKKVEERELP (86 aa)).

The protein belongs to the FKBP-type PPIase family. Tig subfamily. In terms of assembly, homodimer and monomer. In vivo most of the ribosomes are in complex with monomeric TF. Uncomplexed TF, however, is in a monomer-dimer equilibrium with approximately two thirds of TF existing in a dimeric state.

The protein resides in the cytoplasm. The catalysed reaction is [protein]-peptidylproline (omega=180) = [protein]-peptidylproline (omega=0). Functionally, involved in protein export. Acts as a chaperone by maintaining the newly synthesized protein in an open conformation. Functions as a peptidyl-prolyl cis-trans isomerase. This Escherichia coli O45:K1 (strain S88 / ExPEC) protein is Trigger factor.